Reading from the N-terminus, the 504-residue chain is ATP synthase subunit alpha 1 (504 aa).

170-177 (GDRQIGKT) is a binding site for ATP.

This sequence belongs to the ATPase alpha/beta chains family. As to quaternary structure, F-type ATPases have 2 components, CF(1) - the catalytic core - and CF(0) - the membrane proton channel. CF(1) has five subunits: alpha(3), beta(3), gamma(1), delta(1), epsilon(1). CF(0) has three main subunits: a(1), b(2) and c(9-12). The alpha and beta chains form an alternating ring which encloses part of the gamma chain. CF(1) is attached to CF(0) by a central stalk formed by the gamma and epsilon chains, while a peripheral stalk is formed by the delta and b chains.

It localises to the cell inner membrane. The enzyme catalyses ATP + H2O + 4 H(+)(in) = ADP + phosphate + 5 H(+)(out). Functionally, produces ATP from ADP in the presence of a proton gradient across the membrane. The alpha chain is a regulatory subunit. The polypeptide is ATP synthase subunit alpha 1 (Syntrophus aciditrophicus (strain SB)).